The primary structure comprises 445 residues: Signal recognition particle 54 kDa protein (445 aa).

Residues 106–113 (GLQGSGKT), 186–190 (DTAGR), and 244–247 (TKLD) each bind GTP.

Belongs to the GTP-binding SRP family. SRP54 subfamily. Part of the signal recognition particle protein translocation system, which is composed of SRP and FtsY. Archaeal SRP consists of a 7S RNA molecule of 300 nucleotides and two protein subunits: SRP54 and SRP19.

It is found in the cytoplasm. The enzyme catalyses GTP + H2O = GDP + phosphate + H(+). Functionally, involved in targeting and insertion of nascent membrane proteins into the cytoplasmic membrane. Binds to the hydrophobic signal sequence of the ribosome-nascent chain (RNC) as it emerges from the ribosomes. The SRP-RNC complex is then targeted to the cytoplasmic membrane where it interacts with the SRP receptor FtsY. The protein is Signal recognition particle 54 kDa protein of Methanobrevibacter smithii (strain ATCC 35061 / DSM 861 / OCM 144 / PS).